The sequence spans 228 residues: Aquaporin Z 2 (228 aa).

The next 2 helical transmembrane spans lie at 9-29 and 34-54; these read FFGTFWLVFGGCGSAVFAAAF and IGFTGVALAFGLTVLTMAYAV. The NPA 1 motif lies at 63–65; the sequence is NPA. 3 helical membrane passes run 82 to 102, 129 to 149, and 158 to 178; these read VPYVIAQVAGAIVAAAALYVI, LVSALLIEIILTAFFLIVILG, and GFAPIAIGLALTLIHLISIPV. Residues 184 to 186 carry the NPA 2 motif; the sequence is NPA. A helical membrane pass occupies residues 204-224; that stretch reads WLFWLAPIVGGAAGAVIWKLF.

The protein belongs to the MIP/aquaporin (TC 1.A.8) family. As to quaternary structure, homotetramer.

It is found in the cell inner membrane. It catalyses the reaction H2O(in) = H2O(out). Channel that permits osmotically driven movement of water in both directions. It is involved in the osmoregulation and in the maintenance of cell turgor during volume expansion in rapidly growing cells. It mediates rapid entry or exit of water in response to abrupt changes in osmolarity. This chain is Aquaporin Z 2, found in Agrobacterium fabrum (strain C58 / ATCC 33970) (Agrobacterium tumefaciens (strain C58)).